Here is a 368-residue protein sequence, read N- to C-terminus: Divinyl chlorophyll a/b light-harvesting protein PcbA (368 aa).

6 helical membrane-spanning segments follow: residues Phe-27–Leu-47, Gly-63–Ile-83, Met-89–Leu-109, Val-203–Phe-223, Phe-243–Ala-263, and Leu-307–Leu-327.

It belongs to the PsbB/PsbC family. IsiA/Pcb subfamily. As to quaternary structure, the antenna complex consists of divinyl chlorophylls (a and b) and divinyl chlorophyll a/b binding proteins. Forms complexes with PSII, consisting of a PSII dimer and 4 or 8 PcbA subunits. These complexes are also found under conditions of iron-starvation. Requires divinyl chlorophyll a as cofactor. The cofactor is divinyl chlorophyll b.

Its subcellular location is the cellular thylakoid membrane. The antenna complex functions as a light receptor, it captures and delivers excitation energy to photosystems II. The Prochlorales pcb genes are not related to higher plant LHCs. The protein is Divinyl chlorophyll a/b light-harvesting protein PcbA (pcbA) of Prochlorococcus marinus (strain MIT 9313).